A 521-amino-acid chain; its full sequence is Probable inorganic phosphate transporter 1-3 (521 aa).

The Cytoplasmic portion of the chain corresponds to 1–24; it reads MADQQLGVLKALDVAKTQLYHFTA. Residues 25–45 form a helical membrane-spanning segment; it reads IVIAGMGFFTDAYDLFCVSLV. The Extracellular segment spans residues 46 to 70; it reads TKLLGRLYYFNPTSAKPGSLPPHVA. Residues 71-91 form a helical membrane-spanning segment; sequence AAVNGVALCGTLAGQLFFGWL. Residues 92-99 lie on the Cytoplasmic side of the membrane; that stretch reads GDKLGRKK. Residues 100–120 traverse the membrane as a helical segment; it reads VYGITLIMMILCSVASGLSLG. Residues 121–131 are Extracellular-facing; that stretch reads NSAKGVMTTLC. The helical transmembrane segment at 132–152 threads the bilayer; that stretch reads FFRFWLGFGIGGDYPLSATIM. At 153 to 161 the chain is on the cytoplasmic side; the sequence is SEYANKKTR. Residues 162-182 traverse the membrane as a helical segment; it reads GAFIAAVFAMQGVGILAGGFV. The Extracellular portion of the chain corresponds to 183–211; the sequence is ALAVSSIFDKKFPSPTYEQDRFLSTPPQA. The chain crosses the membrane as a helical span at residues 212-232; that stretch reads DYIWRIIVMFGALPAALTYYW. At 233-292 the chain is on the cytoplasmic side; sequence RMKMPETARYTALVAKNIKQATADMSKVLQTDLELEERVEDDVKDPKKNYGLFSKEFLRR. Residues 293–313 form a helical membrane-spanning segment; it reads HGLHLLGTTSTWFLLDIAFYS. At 314-348 the chain is on the extracellular side; that stretch reads QNLFQKDIFSAIGWIPKAATMNAIHEVFKIARAQT. The helical transmembrane segment at 349–369 threads the bilayer; sequence LIALCSTVPGYWFTVAFIDII. Topologically, residues 370 to 371 are cytoplasmic; it reads GR. Residues 372–392 traverse the membrane as a helical segment; the sequence is FAIQLMGFFMMTVFMFAIAFP. Over 393–402 the chain is Extracellular; that stretch reads YNHWILPDNR. A helical transmembrane segment spans residues 403 to 423; it reads IGFVVMYSLTFFFANFGPNAT. The Cytoplasmic portion of the chain corresponds to 424–441; sequence TFIVPAEIFPARLRSTCH. The chain crosses the membrane as a helical span at residues 442 to 462; that stretch reads GISAATGKAGAIVGAFGFLYA. Over 463-484 the chain is Extracellular; the sequence is AQPQDKTKTDAGYPPGIGVKNS. The helical transmembrane segment at 485-505 threads the bilayer; sequence LIMLGVINFVGMLFTFLVPEP. The Cytoplasmic segment spans residues 506–521; it reads KGKSLEELSGEAEVDK.

It belongs to the major facilitator superfamily. Phosphate:H(+) symporter (TC 2.A.1.9) family. In terms of tissue distribution, mainly expressed in roots, especially in the stele of the primary root, the pericycle and trichoblasts of secondary roots. To a lower extent, present in hydathodes and vascular tissues of young leaves.

It localises to the membrane. Functionally, high-affinity transporter for external inorganic phosphate. This is Probable inorganic phosphate transporter 1-3 (PHT1-3) from Arabidopsis thaliana (Mouse-ear cress).